A 691-amino-acid polypeptide reads, in one-letter code: Methionine--tRNA ligase (691 aa).

The 'HIGH' region signature appears at 14 to 24 (PYANGPFHLGH). Zn(2+) is bound by residues C148, C151, C161, and C164. The 'KMSKS' region signature appears at 344 to 348 (KMSKS). ATP is bound at residue K347. The region spanning 585–691 (DFDRVDLRVA…PGAKPGMRVR (107 aa)) is the tRNA-binding domain.

It belongs to the class-I aminoacyl-tRNA synthetase family. MetG type 1 subfamily. Homodimer. Zn(2+) is required as a cofactor.

The protein resides in the cytoplasm. The catalysed reaction is tRNA(Met) + L-methionine + ATP = L-methionyl-tRNA(Met) + AMP + diphosphate. In terms of biological role, is required not only for elongation of protein synthesis but also for the initiation of all mRNA translation through initiator tRNA(fMet) aminoacylation. This Verminephrobacter eiseniae (strain EF01-2) protein is Methionine--tRNA ligase.